The chain runs to 710 residues: Adenylosuccinate synthetase (710 aa).

Disordered regions lie at residues 1–57 (MPVR…NHAK) and 82–112 (MDDE…SAQC). Residues 11 to 25 (NNSSSGVSNALSSSS) show a composition bias toward low complexity. Positions 32-43 (SPSSRENSTPLS) are enriched in polar residues. Residues 180-186 (GDEGKGK) and 210-212 (GHT) contribute to the GTP site. The active-site Proton acceptor is the Asp181. Mg(2+)-binding residues include Asp181 and Gly210. IMP-binding positions include 181 to 184 (DEGK), 208 to 211 (NAGH), Thr295, Lys309, Gln421, Thr437, and Lys567. The Proton donor role is filled by His211. A substrate-binding site is contributed by 563-569 (AVTKKPR). GTP contacts are provided by residues Arg569 and 697–699 (GNG).

This sequence belongs to the adenylosuccinate synthetase family. As to quaternary structure, homodimer. Mg(2+) is required as a cofactor.

It is found in the cytoplasm. The enzyme catalyses IMP + L-aspartate + GTP = N(6)-(1,2-dicarboxyethyl)-AMP + GDP + phosphate + 2 H(+). It participates in purine metabolism; AMP biosynthesis via de novo pathway; AMP from IMP: step 1/2. Plays an important role in the salvage pathway for purine nucleotide biosynthesis. Catalyzes the first committed step in the biosynthesis of AMP from IMP. The polypeptide is Adenylosuccinate synthetase (Leishmania braziliensis).